The following is a 542-amino-acid chain: MTRYIFVTGGVVSSLGKGIASASLAAILEARGLKVTMLKLDPYINVDPGTMSPFQHGEVFVTHDGAETDLDLGHYERFIRTTMTQNNNFTTGRIYEHVLRKERRGDYLGATIQVIPHITDEIKRRIIKGAGDADVALVEIGGTVGDIESQPFLEAIRQLRFEVGAKRAMLMHLTLVPYIATAGETKTKPTQHSVKELRSIGLQPDVLVCRSDHPIDSSSRRKIAQFTNVEERAVIALEDADTIYKIPGILHAQGLDDFVVERFGLQCNSADLSEWDKVVDAKLNPEHEVTIAMVGKYMELLDAYKSLIEAMSHAGITNRTKVNLRYIDSEDIENQGTSLLEGADAILVPGGFGLRGVEGKITAVQYARENKVPYLGICLGMQVAVIEFARNVMGWKDANSTEFDRNSGHPVVGLITEWADATGAVETRTEASDLGGTMRLGAQDCQLAAGSKVHDCYGKDVITERHRHRYEVNNNLLPQLVDAGLVVSGRSEDGALVEVVESKDHPWFVACQFHPEFTSTPRDGHPLFSGFVKAALAQKNKA.

The amidoligase domain stretch occupies residues 1–265 (MTRYIFVTGG…DDFVVERFGL (265 aa)). Serine 13 lines the CTP pocket. Residue serine 13 participates in UTP binding. Residues 14-19 (SLGKGI) and aspartate 71 contribute to the ATP site. Residues aspartate 71 and glutamate 139 each coordinate Mg(2+). CTP contacts are provided by residues 146-148 (DIE), 186-191 (KTKPTQ), and lysine 222. UTP contacts are provided by residues 186 to 191 (KTKPTQ) and lysine 222. The Glutamine amidotransferase type-1 domain occupies 290-541 (TIAMVGKYME…VKAALAQKNK (252 aa)). Glycine 351 is an L-glutamine binding site. The active-site Nucleophile; for glutamine hydrolysis is the cysteine 378. Residues 379 to 382 (LGMQ), glutamate 402, and arginine 469 contribute to the L-glutamine site. Catalysis depends on residues histidine 514 and glutamate 516.

It belongs to the CTP synthase family. In terms of assembly, homotetramer.

The enzyme catalyses UTP + L-glutamine + ATP + H2O = CTP + L-glutamate + ADP + phosphate + 2 H(+). It catalyses the reaction L-glutamine + H2O = L-glutamate + NH4(+). It carries out the reaction UTP + NH4(+) + ATP = CTP + ADP + phosphate + 2 H(+). It functions in the pathway pyrimidine metabolism; CTP biosynthesis via de novo pathway; CTP from UDP: step 2/2. Its activity is regulated as follows. Allosterically activated by GTP, when glutamine is the substrate; GTP has no effect on the reaction when ammonia is the substrate. The allosteric effector GTP functions by stabilizing the protein conformation that binds the tetrahedral intermediate(s) formed during glutamine hydrolysis. Inhibited by the product CTP, via allosteric rather than competitive inhibition. Functionally, catalyzes the ATP-dependent amination of UTP to CTP with either L-glutamine or ammonia as the source of nitrogen. Regulates intracellular CTP levels through interactions with the four ribonucleotide triphosphates. The polypeptide is CTP synthase (Pseudomonas putida (strain W619)).